Consider the following 183-residue polypeptide: NADH-quinone oxidoreductase subunit A (183 aa).

3 helical membrane-spanning segments follow: residues 11–31, 63–83, and 98–118; these read IIAFVIGVTFLCVFMLTVPLL, FYLVAIFFVVFDLEALYLYAW, and VVIFVVDLLIALVYAFSVGAL. The interval 159–183 is disordered; sequence TGQIPAQSSGRVKSKTTPALSSEKE.

Belongs to the complex I subunit 3 family. NDH-1 is composed of 14 different subunits. Subunits NuoA, H, J, K, L, M, N constitute the membrane sector of the complex.

The protein localises to the cell inner membrane. It carries out the reaction a quinone + NADH + 5 H(+)(in) = a quinol + NAD(+) + 4 H(+)(out). In terms of biological role, NDH-1 shuttles electrons from NADH, via FMN and iron-sulfur (Fe-S) centers, to quinones in the respiratory chain. The immediate electron acceptor for the enzyme in this species is believed to be ubiquinone. Couples the redox reaction to proton translocation (for every two electrons transferred, four hydrogen ions are translocated across the cytoplasmic membrane), and thus conserves the redox energy in a proton gradient. The sequence is that of NADH-quinone oxidoreductase subunit A from Acinetobacter baumannii (strain ACICU).